The following is a 249-amino-acid chain: Triosephosphate isomerase (249 aa).

9–11 contacts substrate; the sequence is NWK. The active-site Electrophile is the H94. E166 serves as the catalytic Proton acceptor. Substrate-binding positions include G172 and 232–233; that span reads GG.

This sequence belongs to the triosephosphate isomerase family. Homodimer.

The protein resides in the cytoplasm. The enzyme catalyses D-glyceraldehyde 3-phosphate = dihydroxyacetone phosphate. The protein operates within carbohydrate biosynthesis; gluconeogenesis. It functions in the pathway carbohydrate degradation; glycolysis; D-glyceraldehyde 3-phosphate from glycerone phosphate: step 1/1. Functionally, involved in the gluconeogenesis. Catalyzes stereospecifically the conversion of dihydroxyacetone phosphate (DHAP) to D-glyceraldehyde-3-phosphate (G3P). This is Triosephosphate isomerase from Xylella fastidiosa (strain 9a5c).